A 165-amino-acid polypeptide reads, in one-letter code: GTP-dependent dephospho-CoA kinase (165 aa).

The GTP site is built by Asp44, Val45, Asp63, Lys65, Glu115, and Asp138.

This sequence belongs to the GTP-dependent DPCK family.

It catalyses the reaction 3'-dephospho-CoA + GTP = GDP + CoA + H(+). It participates in cofactor biosynthesis; coenzyme A biosynthesis. Functionally, catalyzes the GTP-dependent phosphorylation of the 3'-hydroxyl group of dephosphocoenzyme A to form coenzyme A (CoA). This is GTP-dependent dephospho-CoA kinase from Picrophilus torridus (strain ATCC 700027 / DSM 9790 / JCM 10055 / NBRC 100828 / KAW 2/3).